The chain runs to 472 residues: Doublesex- and mab-3-related transcription factor 3 (472 aa).

The DM DNA-binding region spans 29-76; that stretch reads CARCRNHGVLSWLKGHKRYCRFKDCTCEKCILIIERQRVMAAQVALRR. Disordered stretches follow at residues 89 to 128 and 155 to 191; these read DSLR…AELA and EERL…GCFT. The segment covering 95–123 has biased composition (pro residues); sequence PGPPPPGDAVAAPQPPPASQPSQPQPPRP. Residues 155 to 179 show a composition bias toward basic and acidic residues; it reads EERLGDGKSADNTEVFSDKDTDQRS. Positions 249–284 constitute a DMA domain; it reads RPPLEVLKKIFPNQKPTVLELILKGCGGDLVSAVEV. The tract at residues 430-472 is disordered; the sequence is TEDPRISIPDDGCPFVSKQSIYTEDDYDERSDSSDSRTLNTSS.

It belongs to the DMRT family. May homodimerize. In terms of tissue distribution, expressed in testis.

It localises to the nucleus. In terms of biological role, probable transcription factor that plays a role in configuring the spinal circuits controlling stride in vertebrates. Involved in neuronal specification within specific subdivision of spinal cord neurons and in the development of a coordinated locomotor network controlling limb movements. May regulate transcription during sexual development. This chain is Doublesex- and mab-3-related transcription factor 3 (DMRT3), found in Homo sapiens (Human).